The primary structure comprises 316 residues: Pantothenate kinase (316 aa).

Residue 95 to 102 participates in ATP binding; the sequence is GSVAVGKS.

This sequence belongs to the prokaryotic pantothenate kinase family.

The protein resides in the cytoplasm. The catalysed reaction is (R)-pantothenate + ATP = (R)-4'-phosphopantothenate + ADP + H(+). It participates in cofactor biosynthesis; coenzyme A biosynthesis; CoA from (R)-pantothenate: step 1/5. This chain is Pantothenate kinase, found in Salmonella gallinarum (strain 287/91 / NCTC 13346).